Here is a 308-residue protein sequence, read N- to C-terminus: tRNA dimethylallyltransferase (308 aa).

An ATP-binding site is contributed by 9-16 (GPTAVGKT). 11–16 (TAVGKT) contacts substrate. The interval 34 to 37 (DSMQ) is interaction with substrate tRNA.

This sequence belongs to the IPP transferase family. Monomer. Mg(2+) serves as cofactor.

The enzyme catalyses adenosine(37) in tRNA + dimethylallyl diphosphate = N(6)-dimethylallyladenosine(37) in tRNA + diphosphate. Catalyzes the transfer of a dimethylallyl group onto the adenine at position 37 in tRNAs that read codons beginning with uridine, leading to the formation of N6-(dimethylallyl)adenosine (i(6)A). The protein is tRNA dimethylallyltransferase of Lactobacillus delbrueckii subsp. bulgaricus (strain ATCC 11842 / DSM 20081 / BCRC 10696 / JCM 1002 / NBRC 13953 / NCIMB 11778 / NCTC 12712 / WDCM 00102 / Lb 14).